A 270-amino-acid polypeptide reads, in one-letter code: Flavodoxin/ferredoxin--NADP reductase (270 aa).

The FAD-binding FR-type domain occupies 12–113 (VLPDAQTVTS…PKPVGTLVID (102 aa)). FAD contacts are provided by residues 62–65 (RAYS), 78–80 (YSI), and 86–88 (PLT). Thr-126 is an NADP(+) binding site. Thr-128 contacts FAD. NADP(+) contacts are provided by residues Arg-156, 192–193 (TR), Arg-201, and Asp-238. FAD is bound at residue 264 to 270 (AFVGEGI).

It belongs to the ferredoxin--NADP reductase type 1 family. In terms of assembly, monomer. Requires FAD as cofactor.

Its subcellular location is the cytoplasm. The enzyme catalyses 2 reduced [2Fe-2S]-[ferredoxin] + NADP(+) + H(+) = 2 oxidized [2Fe-2S]-[ferredoxin] + NADPH. It carries out the reaction reduced [flavodoxin] + NADP(+) = oxidized [flavodoxin] + NADPH + 2 H(+). In terms of biological role, transports electrons between flavodoxin or ferredoxin and NADPH. This chain is Flavodoxin/ferredoxin--NADP reductase, found in Rhodobacter capsulatus (Rhodopseudomonas capsulata).